Consider the following 408-residue polypeptide: uncharacterized protein (408 aa).

3 residues coordinate a divalent metal cation: Glu35, Asp61, and Asn96.

This sequence belongs to the metallophosphoesterase superfamily. The cofactor is a divalent metal cation.

This is an uncharacterized protein from Bacillus subtilis (strain 168).